We begin with the raw amino-acid sequence, 303 residues long: Fe-S cluster assembly protein DRE2 (303 aa).

The N-terminal SAM-like domain stretch occupies residues 1–125; that stretch reads MTHSRTALVL…WQKRAVTASA (125 aa). Positions 126–188 are linker; that stretch reads PVKLAPRQPV…GDAPIAENDL (63 aa). Cys202, Cys213, Cys216, and Cys218 together coordinate [2Fe-2S] cluster. A fe-S binding site A region spans residues 202–218; it reads CGRTQTRRRKACKDCTC. Cys266, Cys269, Cys277, and Cys280 together coordinate [4Fe-4S] cluster. 2 short sequence motifs (cx2C motif) span residues 266–269 and 277–280; these read CGSC and CSGC. The interval 266 to 280 is fe-S binding site B; the sequence is CGSCSLGDAFRCSGC.

Belongs to the anamorsin family. As to quaternary structure, monomer. Interacts with TAH18. Interacts with MIA40. It depends on [2Fe-2S] cluster as a cofactor. Requires [4Fe-4S] cluster as cofactor.

The protein resides in the cytoplasm. It localises to the mitochondrion intermembrane space. Its function is as follows. Component of the cytosolic iron-sulfur (Fe-S) protein assembly (CIA) machinery required for the maturation of extramitochondrial Fe-S proteins. Part of an electron transfer chain functioning in an early step of cytosolic Fe-S biogenesis, facilitating the de novo assembly of a [4Fe-4S] cluster on the scaffold complex CFD1-NBP35. Electrons are transferred to DRE2 from NADPH via the FAD- and FMN-containing protein TAH18. TAH18-DRE2 are also required for the assembly of the diferric tyrosyl radical cofactor of ribonucleotide reductase (RNR), probably by providing electrons for reduction during radical cofactor maturation in the catalytic small subunit RNR2. The protein is Fe-S cluster assembly protein DRE2 of Eremothecium gossypii (strain ATCC 10895 / CBS 109.51 / FGSC 9923 / NRRL Y-1056) (Yeast).